Reading from the N-terminus, the 100-residue chain is MDNIQTFFDQYVHLPSEISSKHDHAYIILILLSVILILLLLICNLCICYFIRQRRRRELIDYPSNTLQYIPFPRNVRKPYRTESGTSSSNRMMLPPRQHV.

A disordered region spans residues 78-100; the sequence is KPYRTESGTSSSNRMMLPPRQHV.

This is an uncharacterized protein from Caenorhabditis elegans.